The chain runs to 691 residues: Gex-3-interacting protein 13 (691 aa).

2 disordered regions span residues Thr18–Leu97 and Pro171–Arg195. The span at Ser31–Ser46 shows a compositional bias: low complexity. The segment covering Ser47 to Thr57 has biased composition (basic and acidic residues). Polar residues predominate over residues Glu58–Glu79. Residues Pro171–Ser183 show a composition bias toward low complexity. BED-type zinc fingers lie at residues Gln194–Val242 and Leu424–Val473. Positions 212, 215, 230, 235, 443, 446, 461, and 466 each coordinate Zn(2+).

As to quaternary structure, interacts with gex-3.

This chain is Gex-3-interacting protein 13 (gei-13), found in Caenorhabditis elegans.